A 480-amino-acid chain; its full sequence is 2-phosphoxylose phosphatase 1 (480 aa).

Over 1 to 6 (MLFRNR) the chain is Cytoplasmic. Residues 7–27 (FLLLLALAALLAFVSLSLQFF) traverse the membrane as a helical; Signal-anchor for type II membrane protein segment. At 28–480 (HLIPVSTPKN…YYDACHREGF (453 aa)) the chain is on the lumenal side. Residue histidine 97 is the Nucleophile of the active site. N-linked (GlcNAc...) asparagine glycans are attached at residues asparagine 305 and asparagine 354. The active-site Proton donor is aspartate 379.

Belongs to the histidine acid phosphatase family. Interacts with B3GAT3; the interaction increases the 2-phosphoxylose phosphatase activity of PXYLP1 during completion of linkage region formation in a B3GAT3-mediated manner. Widely expressed. Strongly expressed in spleen, fetal liver, moderately in placenta, pancreas, kidney, thymus and colon.

It is found in the golgi apparatus membrane. It catalyses the reaction 3-O-[beta-D-GlcA-(1-&gt;3)-beta-D-Gal-(1-&gt;3)-beta-D-Gal-(1-&gt;4)-beta-D-2-O-P-Xyl]-L-seryl-[protein] + H2O = 3-O-(beta-D-GlcA-(1-&gt;3)-beta-D-Gal-(1-&gt;3)-beta-D-Gal-(1-&gt;4)-beta-D-Xyl)-L-seryl-[protein] + phosphate. In terms of biological role, responsible for the 2-O-dephosphorylation of xylose in the glycosaminoglycan-protein linkage region of proteoglycans thereby regulating the amount of mature glycosaminoglycan (GAG) chains. Sulfated glycosaminoglycans (GAGs), including heparan sulfate and chondroitin sulfate, are synthesized on the so-called common GAG-protein linkage region (GlcUAbeta1-3Galbeta1-3Galbeta1-4Xylbeta1-O-Ser) of core proteins, which is formed by the stepwise addition of monosaccharide residues by the respective specific glycosyltransferases. Xylose 2-O-dephosphorylation during completion of linkage region formation is a prerequisite for the initiation and efficient elongation of the repeating disaccharide region of GAG chains. This chain is 2-phosphoxylose phosphatase 1, found in Homo sapiens (Human).